The sequence spans 178 residues: UPF0302 protein Bcer98_1244 (178 aa).

The protein belongs to the UPF0302 family.

In Bacillus cytotoxicus (strain DSM 22905 / CIP 110041 / 391-98 / NVH 391-98), this protein is UPF0302 protein Bcer98_1244.